The chain runs to 248 residues: tRNA1(Val) (adenine(37)-N6)-methyltransferase (248 aa).

This sequence belongs to the methyltransferase superfamily. tRNA (adenine-N(6)-)-methyltransferase family.

The protein localises to the cytoplasm. It catalyses the reaction adenosine(37) in tRNA1(Val) + S-adenosyl-L-methionine = N(6)-methyladenosine(37) in tRNA1(Val) + S-adenosyl-L-homocysteine + H(+). Specifically methylates the adenine in position 37 of tRNA(1)(Val) (anticodon cmo5UAC). This Musicola paradisiaca (strain Ech703) (Dickeya paradisiaca) protein is tRNA1(Val) (adenine(37)-N6)-methyltransferase.